Reading from the N-terminus, the 117-residue chain is Large ribosomal subunit protein uL22 (117 aa).

It belongs to the universal ribosomal protein uL22 family. In terms of assembly, part of the 50S ribosomal subunit.

This protein binds specifically to 23S rRNA; its binding is stimulated by other ribosomal proteins, e.g. L4, L17, and L20. It is important during the early stages of 50S assembly. It makes multiple contacts with different domains of the 23S rRNA in the assembled 50S subunit and ribosome. In terms of biological role, the globular domain of the protein is located near the polypeptide exit tunnel on the outside of the subunit, while an extended beta-hairpin is found that lines the wall of the exit tunnel in the center of the 70S ribosome. This chain is Large ribosomal subunit protein uL22, found in Lactobacillus delbrueckii subsp. bulgaricus (strain ATCC 11842 / DSM 20081 / BCRC 10696 / JCM 1002 / NBRC 13953 / NCIMB 11778 / NCTC 12712 / WDCM 00102 / Lb 14).